The primary structure comprises 163 residues: Peptide methionine sulfoxide reductase MsrA (163 aa).

Cysteine 10 is an active-site residue.

The protein belongs to the MsrA Met sulfoxide reductase family.

The catalysed reaction is L-methionyl-[protein] + [thioredoxin]-disulfide + H2O = L-methionyl-(S)-S-oxide-[protein] + [thioredoxin]-dithiol. It carries out the reaction [thioredoxin]-disulfide + L-methionine + H2O = L-methionine (S)-S-oxide + [thioredoxin]-dithiol. Its function is as follows. Has an important function as a repair enzyme for proteins that have been inactivated by oxidation. Catalyzes the reversible oxidation-reduction of methionine sulfoxide in proteins to methionine. This Vesicomyosocius okutanii subsp. Calyptogena okutanii (strain HA) protein is Peptide methionine sulfoxide reductase MsrA.